The primary structure comprises 337 residues: Fructose-1,6-bisphosphatase class 1 (337 aa).

Residues glutamate 91, aspartate 113, leucine 115, and aspartate 116 each contribute to the Mg(2+) site. Substrate is bound by residues 116 to 119, asparagine 209, tyrosine 242, and lysine 275; that span reads DGSS. Glutamate 281 is a Mg(2+) binding site.

This sequence belongs to the FBPase class 1 family. In terms of assembly, homotetramer. The cofactor is Mg(2+).

Its subcellular location is the cytoplasm. It carries out the reaction beta-D-fructose 1,6-bisphosphate + H2O = beta-D-fructose 6-phosphate + phosphate. It functions in the pathway carbohydrate biosynthesis; gluconeogenesis. The sequence is that of Fructose-1,6-bisphosphatase class 1 from Nitratidesulfovibrio vulgaris (strain DP4) (Desulfovibrio vulgaris).